Reading from the N-terminus, the 440-residue chain is Ribosomal protein uS12 methylthiotransferase RimO (440 aa).

Positions 8–118 (PTVGFVSLGC…VMGIVHTHLP (111 aa)) constitute an MTTase N-terminal domain. Residues cysteine 17, cysteine 53, cysteine 82, cysteine 149, cysteine 153, and cysteine 156 each contribute to the [4Fe-4S] cluster site. The Radical SAM core domain occupies 135–372 (LTPDHFAYLK…MQVQEDISAD (238 aa)). The 66-residue stretch at 375-440 (AAKIDTVIQV…DHHDLYAQVV (66 aa)) folds into the TRAM domain.

The protein belongs to the methylthiotransferase family. RimO subfamily. [4Fe-4S] cluster serves as cofactor.

It is found in the cytoplasm. The enzyme catalyses L-aspartate(89)-[ribosomal protein uS12]-hydrogen + (sulfur carrier)-SH + AH2 + 2 S-adenosyl-L-methionine = 3-methylsulfanyl-L-aspartate(89)-[ribosomal protein uS12]-hydrogen + (sulfur carrier)-H + 5'-deoxyadenosine + L-methionine + A + S-adenosyl-L-homocysteine + 2 H(+). In terms of biological role, catalyzes the methylthiolation of an aspartic acid residue of ribosomal protein uS12. The polypeptide is Ribosomal protein uS12 methylthiotransferase RimO (Dechloromonas aromatica (strain RCB)).